Reading from the N-terminus, the 189-residue chain is Transcription factor FapR (189 aa).

This sequence belongs to the FapR family.

Its function is as follows. Transcriptional factor involved in regulation of membrane lipid biosynthesis by repressing genes involved in fatty acid and phospholipid metabolism. This Listeria monocytogenes serotype 4a (strain HCC23) protein is Transcription factor FapR.